The chain runs to 341 residues: Phenylalanine--tRNA ligase alpha subunit (341 aa).

A Mg(2+)-binding site is contributed by glutamate 256.

Belongs to the class-II aminoacyl-tRNA synthetase family. Phe-tRNA synthetase alpha subunit type 1 subfamily. As to quaternary structure, tetramer of two alpha and two beta subunits. Mg(2+) serves as cofactor.

The protein localises to the cytoplasm. It carries out the reaction tRNA(Phe) + L-phenylalanine + ATP = L-phenylalanyl-tRNA(Phe) + AMP + diphosphate + H(+). This chain is Phenylalanine--tRNA ligase alpha subunit, found in Clostridium perfringens (strain 13 / Type A).